A 278-amino-acid polypeptide reads, in one-letter code: 4-deoxy-L-threo-5-hexosulose-uronate ketol-isomerase (278 aa).

Positions 196, 198, 203, and 245 each coordinate Zn(2+).

The protein belongs to the KduI family. Homohexamer. Zn(2+) is required as a cofactor.

It carries out the reaction 5-dehydro-4-deoxy-D-glucuronate = 3-deoxy-D-glycero-2,5-hexodiulosonate. It functions in the pathway glycan metabolism; pectin degradation; 2-dehydro-3-deoxy-D-gluconate from pectin: step 4/5. Catalyzes the isomerization of 5-dehydro-4-deoxy-D-glucuronate to 3-deoxy-D-glycero-2,5-hexodiulosonate. This is 4-deoxy-L-threo-5-hexosulose-uronate ketol-isomerase from Escherichia coli (strain 55989 / EAEC).